We begin with the raw amino-acid sequence, 118 residues long: Putative ankyrin repeat protein R747 (118 aa).

The ANK repeat unit spans residues 70–99; the sequence is NCYYLLDYAIMKNDIPVIVTLIEKGANINR.

The chain is Putative ankyrin repeat protein R747 from Acanthamoeba polyphaga (Amoeba).